A 231-amino-acid polypeptide reads, in one-letter code: MEKDLHLHEKKCLAHEAATQVTSGMILGLGSGSTAKEFIFALAHRIQTESLAVHAIASSQNSYALAKQLAIPLLNPEKFSSLDLTVDGADEVDPQLRMIKGGGGAIFREKILLRAAKRSIILVDESKLVPVLGKFRVPLEISRFGRSAIIEEIRHLGYEGEWRLQDTGDLFITDSSNYIYDIFSPNSYPNPEKDLLKLIQIHGVIEVGFVIEKVEVWSSNSQGLISKKYSV.

Substrate-binding positions include 31–34 (SGST), 87–90 (DGAD), and 100–103 (KGGG). E109 (proton acceptor) is an active-site residue. K127 is a binding site for substrate.

Belongs to the ribose 5-phosphate isomerase family. As to quaternary structure, homodimer.

The catalysed reaction is aldehydo-D-ribose 5-phosphate = D-ribulose 5-phosphate. The protein operates within carbohydrate degradation; pentose phosphate pathway; D-ribose 5-phosphate from D-ribulose 5-phosphate (non-oxidative stage): step 1/1. Functionally, catalyzes the reversible conversion of ribose-5-phosphate to ribulose 5-phosphate. This Chlamydia pneumoniae (Chlamydophila pneumoniae) protein is Ribose-5-phosphate isomerase A.